The following is an 84-amino-acid chain: Peptide Ctry2346 (84 aa).

An N-terminal signal peptide occupies residues 1-23 (MKTQTLLFTFSLVLLMVATQTEA). At leucine 33 the chain carries Leucine amide. A propeptide spanning residues 37-84 (GLLDNLLGKRGLLFGKRALTNQDLFDLAYDPSLSAADMDALEMLLENY) is cleaved from the precursor.

It belongs to the non-disulfide-bridged peptide (NDBP) superfamily. Short antimicrobial peptide (group 4) family. As to expression, expressed by the venom gland.

The protein resides in the secreted. It is found in the target cell membrane. Antimicrobial peptide. The protein is Peptide Ctry2346 of Chaerilus tryznai (Scorpion).